We begin with the raw amino-acid sequence, 218 residues long: Ras-related protein Rab-42 (218 aa).

Positions 19, 21, 22, 23, and 46 each coordinate GTP. Mg(2+)-binding residues include threonine 23, threonine 46, and aspartate 70. GTP is bound by residues glycine 73, lysine 130, aspartate 132, valine 160, and lysine 161. 2 S-geranylgeranyl cysteine lipidation sites follow: cysteine 216 and cysteine 218.

This sequence belongs to the small GTPase superfamily. Rab family. Mg(2+) serves as cofactor.

It is found in the membrane. The catalysed reaction is GTP + H2O = GDP + phosphate + H(+). With respect to regulation, regulated by guanine nucleotide exchange factors (GEFs) which promote the exchange of bound GDP for free GTP. Regulated by GTPase activating proteins (GAPs) which increase the GTP hydrolysis activity. Inhibited by GDP dissociation inhibitors (GDIs). In terms of biological role, the small GTPases Rab are key regulators of intracellular membrane trafficking, from the formation of transport vesicles to their fusion with membranes. Rabs cycle between an inactive GDP-bound form and an active GTP-bound form that is able to recruit to membranes different sets of downstream effectors directly responsible for vesicle formation, movement, tethering and fusion. The physiological function of RAB42 remains undefined. In Homo sapiens (Human), this protein is Ras-related protein Rab-42.